We begin with the raw amino-acid sequence, 346 residues long: tRNA N6-adenosine threonylcarbamoyltransferase (346 aa).

2 residues coordinate Fe cation: H111 and H115. Substrate is bound by residues 134–138 (LVSGG), D167, G180, D184, and N279. D307 lines the Fe cation pocket.

It belongs to the KAE1 / TsaD family. Requires Fe(2+) as cofactor.

The protein resides in the cytoplasm. The catalysed reaction is L-threonylcarbamoyladenylate + adenosine(37) in tRNA = N(6)-L-threonylcarbamoyladenosine(37) in tRNA + AMP + H(+). Functionally, required for the formation of a threonylcarbamoyl group on adenosine at position 37 (t(6)A37) in tRNAs that read codons beginning with adenine. Is involved in the transfer of the threonylcarbamoyl moiety of threonylcarbamoyl-AMP (TC-AMP) to the N6 group of A37, together with TsaE and TsaB. TsaD likely plays a direct catalytic role in this reaction. The polypeptide is tRNA N6-adenosine threonylcarbamoyltransferase (Gloeothece citriformis (strain PCC 7424) (Cyanothece sp. (strain PCC 7424))).